The primary structure comprises 117 residues: Large ribosomal subunit protein eL18 (117 aa).

Belongs to the eukaryotic ribosomal protein eL18 family.

This is Large ribosomal subunit protein eL18 from Archaeoglobus fulgidus (strain ATCC 49558 / DSM 4304 / JCM 9628 / NBRC 100126 / VC-16).